Consider the following 50-residue polypeptide: Photosystem II reaction center protein M (50 aa).

A helical membrane pass occupies residues 7 to 27 (GFVASLLFVGIPTIFLIGLFI).

This sequence belongs to the PsbM family. In terms of assembly, PSII is composed of 1 copy each of membrane proteins PsbA, PsbB, PsbC, PsbD, PsbE, PsbF, PsbH, PsbI, PsbJ, PsbK, PsbL, PsbM, PsbT, PsbX, PsbY, Psb30/Ycf12, peripheral proteins PsbO, CyanoQ (PsbQ), PsbU, PsbV and a large number of cofactors. It forms dimeric complexes.

Its subcellular location is the cellular thylakoid membrane. One of the components of the core complex of photosystem II (PSII). PSII is a light-driven water:plastoquinone oxidoreductase that uses light energy to abstract electrons from H(2)O, generating O(2) and a proton gradient subsequently used for ATP formation. It consists of a core antenna complex that captures photons, and an electron transfer chain that converts photonic excitation into a charge separation. This subunit is found at the monomer-monomer interface. The chain is Photosystem II reaction center protein M from Prochlorococcus marinus subsp. pastoris (strain CCMP1986 / NIES-2087 / MED4).